Consider the following 524-residue polypeptide: Bifunctional purine biosynthesis protein PurH (524 aa).

Residues methionine 1 to threonine 149 form the MGS-like domain.

This sequence belongs to the PurH family.

The enzyme catalyses (6R)-10-formyltetrahydrofolate + 5-amino-1-(5-phospho-beta-D-ribosyl)imidazole-4-carboxamide = 5-formamido-1-(5-phospho-D-ribosyl)imidazole-4-carboxamide + (6S)-5,6,7,8-tetrahydrofolate. The catalysed reaction is IMP + H2O = 5-formamido-1-(5-phospho-D-ribosyl)imidazole-4-carboxamide. It functions in the pathway purine metabolism; IMP biosynthesis via de novo pathway; 5-formamido-1-(5-phospho-D-ribosyl)imidazole-4-carboxamide from 5-amino-1-(5-phospho-D-ribosyl)imidazole-4-carboxamide (10-formyl THF route): step 1/1. The protein operates within purine metabolism; IMP biosynthesis via de novo pathway; IMP from 5-formamido-1-(5-phospho-D-ribosyl)imidazole-4-carboxamide: step 1/1. This is Bifunctional purine biosynthesis protein PurH from Chlorobium chlorochromatii (strain CaD3).